Here is a 71-residue protein sequence, read N- to C-terminus: Prophage lysis protein S homolog EssQ (71 aa).

The protein belongs to the lambda phage S protein family.

This chain is Prophage lysis protein S homolog EssQ (essQ), found in Escherichia coli (strain K12).